A 256-amino-acid chain; its full sequence is Ribonuclease 3 (256 aa).

An RNase III domain is found at 6–128 (LATLETRLDH…LFGAVFLDAG (123 aa)). A Mg(2+)-binding site is contributed by Glu41. Asp45 is an active-site residue. Mg(2+)-binding residues include Asp114 and Glu117. Glu117 is a catalytic residue. Residues 155 to 225 (DAKTLLQEFL…AKVALEAAQA (71 aa)) form the DRBM domain.

Belongs to the ribonuclease III family. In terms of assembly, homodimer. Mg(2+) serves as cofactor.

It is found in the cytoplasm. It carries out the reaction Endonucleolytic cleavage to 5'-phosphomonoester.. Digests double-stranded RNA. Involved in the processing of primary rRNA transcript to yield the immediate precursors to the large and small rRNAs (23S and 16S). Processes some mRNAs, and tRNAs when they are encoded in the rRNA operon. Processes pre-crRNA and tracrRNA of type II CRISPR loci if present in the organism. This Bordetella bronchiseptica (strain ATCC BAA-588 / NCTC 13252 / RB50) (Alcaligenes bronchisepticus) protein is Ribonuclease 3.